We begin with the raw amino-acid sequence, 472 residues long: MAWNTNLRWRLPLTCLLLEVVMVILFGVFVRYDFDADAHWWSWRTEFYYRYPSFQDVHVMVFVGFGFLMTFLQRYGFSAVGFNFLLAAFGIQWALLMQGWFHFLQGRYIVVGVENLINADFCVASVCVAFGAVLGKVSPIQLLIMTFFQVTLFAVNEFILLNLLKVKDAGGSMTIHTFGAYFGLTVTRILYRRNLEQSKERQNSVYQSDLFAMIGTLFLWMYWPSFNSAISYHGDSQHRAAINTYCSLAACVLTSVAISSALHKKGKLDMVHIQNATPAGGVAVGTAAEMMLMPYGALIVGFVCGIISTLGFVYLTPFLESRLHIQDTCGINNLHGIPGIIGGIVGAVTAASASLEVYGKEGLVHSFDFQGFKRDWTARTQGKFQIYGLLVTLAMALMGGIIVGVGLILRLPFWGQPSDENCFEDAVYWEMPEGNSTVYIPEDPTFKPSGPSVPSVPMVSPLPMASSVPLVP.

Over 1 to 9 (MAWNTNLRW) the chain is Cytoplasmic. Residues 10–30 (RLPLTCLLLEVVMVILFGVFV) traverse the membrane as a helical segment. Over 31-51 (RYDFDADAHWWSWRTEFYYRY) the chain is Extracellular. Residues 52-72 (PSFQDVHVMVFVGFGFLMTFL) traverse the membrane as a helical segment. Residues 73-76 (QRYG) are Cytoplasmic-facing. Residues 77–97 (FSAVGFNFLLAAFGIQWALLM) form a helical membrane-spanning segment. Topologically, residues 98 to 114 (QGWFHFLQGRYIVVGVE) are extracellular. The helical transmembrane segment at 115-135 (NLINADFCVASVCVAFGAVLG) threads the bilayer. Over 136-139 (KVSP) the chain is Cytoplasmic. The chain crosses the membrane as a helical span at residues 140 to 160 (IQLLIMTFFQVTLFAVNEFIL). Residues 161–168 (LNLLKVKD) lie on the Extracellular side of the membrane. A helical membrane pass occupies residues 169–191 (AGGSMTIHTFGAYFGLTVTRILY). At 192-209 (RRNLEQSKERQNSVYQSD) the chain is on the cytoplasmic side. The chain crosses the membrane as a helical span at residues 210 to 230 (LFAMIGTLFLWMYWPSFNSAI). Over 231 to 241 (SYHGDSQHRAA) the chain is Extracellular. A helical membrane pass occupies residues 242–262 (INTYCSLAACVLTSVAISSAL). Topologically, residues 263–294 (HKKGKLDMVHIQNATPAGGVAVGTAAEMMLMP) are cytoplasmic. The chain crosses the membrane as a helical span at residues 295–315 (YGALIVGFVCGIISTLGFVYL). Over 316 to 336 (TPFLESRLHIQDTCGINNLHG) the chain is Extracellular. The chain crosses the membrane as a helical span at residues 337 to 357 (IPGIIGGIVGAVTAASASLEV). The Cytoplasmic portion of the chain corresponds to 358-388 (YGKEGLVHSFDFQGFKRDWTARTQGKFQIYG). The helical transmembrane segment at 389–409 (LLVTLAMALMGGIIVGVGLIL) threads the bilayer. At 410-450 (RLPFWGQPSDENCFEDAVYWEMPEGNSTVYIPEDPTFKPSG) the chain is on the extracellular side. The N-linked (GlcNAc...) asparagine glycan is linked to Asn435. A helical transmembrane segment spans residues 451 to 471 (PSVPSVPMVSPLPMASSVPLV). A topological domain (cytoplasmic) is located at residue Pro472.

Belongs to the ammonium transporter (TC 2.A.49) family. Rh subfamily. As to quaternary structure, homotrimer. Post-translationally, N-glycosylated.

It localises to the cell membrane. Its subcellular location is the apical cell membrane. It catalyses the reaction NH4(+)(in) = NH4(+)(out). The catalysed reaction is methylamine(out) = methylamine(in). The enzyme catalyses CO2(out) = CO2(in). In terms of biological role, ammonium transporter involved in the maintenance of acid-base homeostasis. Transports ammonium and its related derivative methylammonium across the plasma membrane of epithelial cells likely contributing to renal transepithelial ammonia transport and ammonia metabolism. Postulated to primarily mediate an electroneutral bidirectional transport of NH3 ammonia species according to a mechanism that implies interaction of an NH4(+) ion with acidic residues of the pore entry followed by dissociation of NH4(+) into NH3 and H(+). As a result NH3 transits through the central pore and is protonated on the extracellular side reforming NH4(+). May act as a CO2 channel providing for renal acid secretion. This is Ammonium transporter Rh type C (RHCG) from Pongo abelii (Sumatran orangutan).